We begin with the raw amino-acid sequence, 379 residues long: Putative clathrin assembly protein At1g68110 (379 aa).

The ENTH domain occupies 26-158 (NSSYRNADLE…SFLSDQIHRL (133 aa)).

It is found in the membrane. It localises to the clathrin-coated pit. The protein resides in the golgi apparatus. The protein localises to the cytoplasmic vesicle. Its subcellular location is the clathrin-coated vesicle. The polypeptide is Putative clathrin assembly protein At1g68110 (Arabidopsis thaliana (Mouse-ear cress)).